The primary structure comprises 211 residues: CASP-like protein 3A1 (211 aa).

At 1–45 the chain is on the cytoplasmic side; that stretch reads MGSIGNGRSDSVVGIQMPPAGSKMVLEPEALQVTTSPVPRWPRLG. A helical membrane pass occupies residues 46–66; sequence VVMVATRAVAMVMALLSMSLM. Over 67–95 the chain is Extracellular; that stretch reads VSSKQRGILTIFGIEIPLDANWSFSYSLQ. An N-linked (GlcNAc...) asparagine glycan is attached at Asn-87. Residues 96–116 form a helical membrane-spanning segment; sequence FLVAMSTASAAYSLAQLLLIA. The Cytoplasmic segment spans residues 117–131; that stretch reads HKAVKKSPIVPSRRH. Residues 132-152 traverse the membrane as a helical segment; sequence AWLLFAGDQVFSLAMMSAGSA. Residues 153-186 are Extracellular-facing; that stretch reads AAAVANLNRTGIRHTALPNFCKPLPRFCDLSAVS. Asn-160 carries N-linked (GlcNAc...) asparagine glycosylation. Residues 187 to 207 traverse the membrane as a helical segment; sequence IACAFLSCVFLAASAVIDVIW. The Cytoplasmic portion of the chain corresponds to 208–211; it reads LSSP.

This sequence belongs to the Casparian strip membrane proteins (CASP) family. In terms of assembly, homodimer and heterodimers.

It localises to the cell membrane. The polypeptide is CASP-like protein 3A1 (Sorghum bicolor (Sorghum)).